Consider the following 383-residue polypeptide: Glycoprotein gp2 (383 aa).

The signal sequence occupies residues 1–25 (MGFIYARKLLLCMAVSIYAIGSTTT). Low complexity predominate over residues 24–75 (TTTETTTSSSSTSGSGQSTSSGTTNSSSSPTTSPPTTSSSPPTSTHTSSPST). The disordered stretch occupies residues 24–136 (TTTETTTSSS…RNNSIEIVPQ (113 aa)). Residue Asn48 is glycosylated (N-linked (GlcNAc...) asparagine; by host). The span at 81 to 91 (HAGHHRGRAGG) shows a compositional bias: basic residues. A glycan (N-linked (GlcNAc...) asparagine; by host) is linked at Asn128. A helical transmembrane segment spans residues 354 to 371 (LVAATTLTVTILCLLCCL).

It is found in the virion membrane. Its function is as follows. The glycoprotein gp2 from the avirulent strain Kentucky A (KyA) is probably non functional since this strain harbors an in-frame deletion of 1,242 nucleotides in gene 71. The protein is Glycoprotein gp2 (US4) of Equus caballus (Horse).